A 476-amino-acid polypeptide reads, in one-letter code: Sulfate adenylyltransferase subunit 1 (476 aa).

The tr-type G domain occupies 24–228 (KSLLRFLTCG…MAWYQGPTLL (205 aa)). The interval 33–40 (GSVDDGKS) is G1. 33–40 (GSVDDGKS) serves as a coordination point for GTP. Residues 91 to 95 (GITID) form a G2 region. A G3 region spans residues 112–115 (DTPG). Residues 112–116 (DTPGH) and 167–170 (NKMD) contribute to the GTP site. Residues 167-170 (NKMD) form a G4 region. The tract at residues 205–207 (SAL) is G5.

It belongs to the TRAFAC class translation factor GTPase superfamily. Classic translation factor GTPase family. CysN/NodQ subfamily. Heterodimer composed of CysD, the smaller subunit, and CysN.

It catalyses the reaction sulfate + ATP + H(+) = adenosine 5'-phosphosulfate + diphosphate. It functions in the pathway sulfur metabolism; hydrogen sulfide biosynthesis; sulfite from sulfate: step 1/3. With CysD forms the ATP sulfurylase (ATPS) that catalyzes the adenylation of sulfate producing adenosine 5'-phosphosulfate (APS) and diphosphate, the first enzymatic step in sulfur assimilation pathway. APS synthesis involves the formation of a high-energy phosphoric-sulfuric acid anhydride bond driven by GTP hydrolysis by CysN coupled to ATP hydrolysis by CysD. The polypeptide is Sulfate adenylyltransferase subunit 1 (Vibrio vulnificus (strain CMCP6)).